Here is a 37-residue protein sequence, read N- to C-terminus: Large ribosomal subunit protein bL36A (37 aa).

Belongs to the bacterial ribosomal protein bL36 family.

This Actinobacillus pleuropneumoniae serotype 3 (strain JL03) protein is Large ribosomal subunit protein bL36A.